Here is a 182-residue protein sequence, read N- to C-terminus: NADH-quinone oxidoreductase subunit B 2 (182 aa).

The [4Fe-4S] cluster site is built by Cys55, Cys56, Cys120, and Cys150.

This sequence belongs to the complex I 20 kDa subunit family. In terms of assembly, NDH-1 is composed of 14 different subunits. Subunits NuoB, C, D, E, F, and G constitute the peripheral sector of the complex. [4Fe-4S] cluster serves as cofactor.

It localises to the cell inner membrane. The enzyme catalyses a quinone + NADH + 5 H(+)(in) = a quinol + NAD(+) + 4 H(+)(out). Functionally, NDH-1 shuttles electrons from NADH, via FMN and iron-sulfur (Fe-S) centers, to quinones in the respiratory chain. The immediate electron acceptor for the enzyme in this species is believed to be ubiquinone. Couples the redox reaction to proton translocation (for every two electrons transferred, four hydrogen ions are translocated across the cytoplasmic membrane), and thus conserves the redox energy in a proton gradient. In Sorangium cellulosum (strain So ce56) (Polyangium cellulosum (strain So ce56)), this protein is NADH-quinone oxidoreductase subunit B 2.